Consider the following 441-residue polypeptide: Xylose isomerase (441 aa).

Catalysis depends on residues His99 and Asp102. The Mn(2+) site is built by Glu230, Glu266, Asp294, Asp305, Asp307, and Asp337.

It belongs to the xylose isomerase family. In terms of assembly, homotetramer. Requires Mn(2+) as cofactor.

Its subcellular location is the cytoplasm. The enzyme catalyses alpha-D-xylose = alpha-D-xylulofuranose. The polypeptide is Xylose isomerase (xylA) (Geobacillus stearothermophilus (Bacillus stearothermophilus)).